The primary structure comprises 346 residues: Ketol-acid reductoisomerase (NADP(+)) (346 aa).

Residues 1-141 enclose the KARI N-terminal Rossmann domain; it reads KKNSILKKNQ…GAHHAGVLES (141 aa). NADP(+) is bound by residues Ser-11 and 41–43; that span reads DKQ. His-65 is an active-site residue. Gly-91 lines the NADP(+) pocket. 2 KARI C-terminal knotted domains span residues 142–286 and 287–346; these read SFVA…PEQE and YYDH…NKVI. Residues Asp-150, Glu-154, Glu-322, and Glu-326 each coordinate Mg(2+).

This sequence belongs to the ketol-acid reductoisomerase family. Mg(2+) is required as a cofactor.

It catalyses the reaction (2R)-2,3-dihydroxy-3-methylbutanoate + NADP(+) = (2S)-2-acetolactate + NADPH + H(+). The enzyme catalyses (2R,3R)-2,3-dihydroxy-3-methylpentanoate + NADP(+) = (S)-2-ethyl-2-hydroxy-3-oxobutanoate + NADPH + H(+). Its pathway is amino-acid biosynthesis; L-isoleucine biosynthesis; L-isoleucine from 2-oxobutanoate: step 2/4. It functions in the pathway amino-acid biosynthesis; L-valine biosynthesis; L-valine from pyruvate: step 2/4. In terms of biological role, involved in the biosynthesis of branched-chain amino acids (BCAA). Catalyzes an alkyl-migration followed by a ketol-acid reduction of (S)-2-acetolactate (S2AL) to yield (R)-2,3-dihydroxy-isovalerate. In the isomerase reaction, S2AL is rearranged via a Mg-dependent methyl migration to produce 3-hydroxy-3-methyl-2-ketobutyrate (HMKB). In the reductase reaction, this 2-ketoacid undergoes a metal-dependent reduction by NADPH to yield (R)-2,3-dihydroxy-isovalerate. The chain is Ketol-acid reductoisomerase (NADP(+)) (ilvC) from Buchnera aphidicola subsp. Uroleucon rurale.